The following is a 357-amino-acid chain: NmrA-like family domain-containing oxidoreductase notA' (357 aa).

Residues 13 to 18 (GATGAQ), 39 to 43 (RKPES), 60 to 61 (DG), 81 to 83 (TNS), Lys140, and 164 to 167 (YMDV) contribute to the NADP(+) site.

This sequence belongs to the NmrA-type oxidoreductase family.

NmrA-like family domain-containing oxidoreductase; part of the gene cluster that mediates the biosynthesis of notoamide, a fungal indole alkaloid that belongs to a family of natural products containing a characteristic bicyclo[2.2.2]diazaoctane core. The first step of notoamide biosynthesis involves coupling of L-proline and L-tryptophan by the bimodular NRPS notE', to produce cyclo-L-tryptophan-L-proline called brevianamide F. The reverse prenyltransferase notF' then acts as a deoxybrevianamide E synthase and converts brevianamide F to deoxybrevianamide E via reverse prenylation at C-2 of the indole ring leading to the bicyclo[2.2.2]diazaoctane core. Deoxybrevianamide E is further hydroxylated at C-6 of the indole ring, likely catalyzed by the cytochrome P450 monooxygenase notG', to yield 6-hydroxy-deoxybrevianamide E. 6-hydroxy-deoxybrevianamide E is a specific substrate of the prenyltransferase notC' for normal prenylation at C-7 to produce 6-hydroxy-7-prenyl-deoxybrevianamide, also called notoamide S. As the proposed pivotal branching point in notoamide biosynthesis, notoamide S can be diverted to notoamide E through an oxidative pyran ring closure putatively catalyzed by either notH' cytochrome P450 monooxygenase or the notD' FAD-linked oxidoreductase. This step would be followed by an indole 2,3-epoxidation-initiated pinacol-like rearrangement catalyzed by the notB' FAD-dependent monooxygenase leading to the formation of notoamide C and notoamide D. On the other hand notoamide S is converted to notoamide T by notH' (or notD'), a bifunctional oxidase that also functions as the intramolecular Diels-Alderase responsible for generation of (-)-notoamide T. To generate antipodal (+)-notoaminide T, notH (or notD) in Aspergillus strain MF297-2 is expected to catalyze a Diels-Alder reaction leading to the opposite stereochemistry. The remaining oxidoreductase notD' (or notH') likely catalyzes the oxidative pyran ring formation to yield (-)-stephacidin A. The FAD-dependent monooxygenase notI' is highly similar to notB' and is predicted to catalyze a similar conversion from (-)-stephacidin A to (+)-notoamide B via the 2,3-epoxidation of (-)-stephacidin A followed by a pinacol-type rearrangement. Finally, it remains unclear which enzyme could be responsible for the final hydroxylation steps leading to notoamide A and sclerotiamide. In Aspergillus versicolor, this protein is NmrA-like family domain-containing oxidoreductase notA'.